Here is a 168-residue protein sequence, read N- to C-terminus: Endoribonuclease YbeY (168 aa).

Residues His-125, His-129, and His-135 each contribute to the Zn(2+) site.

The protein belongs to the endoribonuclease YbeY family. Zn(2+) is required as a cofactor.

It localises to the cytoplasm. Functionally, single strand-specific metallo-endoribonuclease involved in late-stage 70S ribosome quality control and in maturation of the 3' terminus of the 16S rRNA. This Rhodopseudomonas palustris (strain BisB18) protein is Endoribonuclease YbeY.